Here is a 248-residue protein sequence, read N- to C-terminus: Calpain small subunit 2 (248 aa).

Ca(2+)-binding residues include alanine 89, aspartate 92, glutamate 94, aspartate 117, aspartate 132, aspartate 134, threonine 136, lysine 138, glutamate 143, aspartate 162, aspartate 164, serine 166, and aspartate 205. 4 consecutive EF-hand domains span residues 119-152, 149-184, 185-213, and 214-248; these read FSLD…NNIK, NNIK…AGFQ, LNEQ…ISCL, and VRLD…TMYS.

In terms of assembly, heterodimer of a large (catalytic) and a small (regulatory) subunit.

The protein localises to the cytoplasm. Its subcellular location is the cell membrane. Functionally, calcium-regulated non-lysosomal thiol-protease which catalyzes limited proteolysis of substrates involved in cytoskeletal remodeling and signal transduction. This small subunit may act as a tissue-specific chaperone of the large subunit, possibly by helping it fold into its correct conformation for activity. This chain is Calpain small subunit 2 (CAPNS2), found in Homo sapiens (Human).